We begin with the raw amino-acid sequence, 1493 residues long: DNA excision repair protein ERCC-6 (1493 aa).

The tract at residues methionine 1 to glycine 39 is disordered. The tract at residues methionine 1 to tyrosine 510 is N-terminal domain; essential for its chromatin remodeling activity. The span at histidine 8 to glutamate 27 shows a compositional bias: polar residues. The residue at position 10 (serine 10) is a Phosphoserine; by ATM. At serine 158 the chain carries Phosphoserine; by CDK2. Lysine 170 carries the post-translational modification N6-methylated lysine; by EHMT2. A Glycyl lysine isopeptide (Lys-Gly) (interchain with G-Cter in SUMO3) cross-link involves residue lysine 205. Lysine 255 is covalently cross-linked (Glycyl lysine isopeptide (Lys-Gly) (interchain with G-Cter in SUMO2)). Disordered regions lie at residues lysine 287–lysine 323 and glycine 344–arginine 453. Position 297 is an N6-methylated lysine; by EHMT2 (lysine 297). The segment covering arginine 353–alanine 363 has biased composition (basic and acidic residues). The span at glutamate 364–glutamate 392 shows a compositional bias: acidic residues. Phosphoserine is present on residues serine 429 and serine 430. Lysine 448 carries the N6-methylated lysine; by EHMT2 modification. Serine 486 and serine 489 each carry phosphoserine. In terms of domain architecture, Helicase ATP-binding spans tryptophan 519–glycine 695. Aspartate 532 to threonine 539 lines the ATP pocket. Residues aspartate 646 to histidine 649 carry the DEAH box motif. One can recognise a Helicase C-terminal domain in the interval valine 843–tyrosine 1002. 3 disordered regions span residues proline 1042–isoleucine 1147, histidine 1181–asparagine 1247, and arginine 1318–leucine 1384. An N6-methylated lysine; by EHMT2 modification is found at lysine 1054. Polar residues predominate over residues isoleucine 1123–proline 1141. Serine 1142 carries the phosphoserine modification. Residues leucine 1200–lysine 1210 show a composition bias toward basic residues. Composition is skewed to basic and acidic residues over residues histidine 1211–arginine 1221 and glutamine 1232–asparagine 1247. The span at lysine 1327 to asparagine 1336 shows a compositional bias: basic residues. Polar residues predominate over residues serine 1337 to glutamate 1351. Serine 1348 carries the post-translational modification Phosphoserine. Residues lysine 1352–aspartate 1376 are compositionally biased toward basic and acidic residues. Positions serine 1386–histidine 1398 match the CSA-interacting motif (CIM) motif. Positions isoleucine 1400–leucine 1428 are ubiquitin-binding domain (UBD). Positions valine 1429 to cysteine 1493 are winged-helix domain (WHD). The segment at serine 1446 to cysteine 1493 is essential for its interaction with RNA polymerase II, transcription-coupled nucleotide excision repair activity, association with chromatin after UV irradiation and for mediating the UV-induced translocation of ERRC8 to the nuclear matrix.

This sequence belongs to the SNF2/RAD54 helicase family. In terms of assembly, homodimer. Binds DNA. Interacts with ERCC8. Interacts with RNA polymerase II; interaction is enhanced by UV irradiation. Component of the B-WICH complex, at least composed of SMARCA5/SNF2H, BAZ1B/WSTF, SF3B1, DEK, MYO1C, ERCC6, MYBBP1A and DDX21. Interacts with KIAA1530/UVSSA. Interacts with ELOA and CUL5; the interaction is induced by DNA damaging agents or by inhibitors of RNA polymerase II elongation. Interacts (via WHD region) with RIF1. Interacts with SMARCC2/BAF170, SMARCB1/BAF47 and the neuron-specific chromatin remodeling complex (nBAF complex). Interacts with ERCC5/XPG (via C-terminus); the interaction stimulates ERCC6/CSB binding to the DNA repair bubble and ERCC6/CSB ATPase activity. May form a complex composed of RNA polymerase II, ERCC6/CSB and ERCC5/XPG which associates with the DNA repair bubble during transcription-coupled nucleotide excision repair. Interacts with CAND1, CSTF1, DDX3X, DDX5, DDX17, DDX23, DHX36, HDAC1, HNRNPU, MTA2, PRPF3, PSMD3, RBBP4, SFPQ, SMARCA1, SMARCA2, TOP1, USP7, XRCC5, COPS3, COPS4, COPS6, DDX1, DDX41, GATAD2A, GATAD2B, PRPF4, PSMC5, SF3B2, CTR9, NONO, PSMD12 and TOP2A. In terms of processing, phosphorylated in a cell cycle-dependent manner at Ser-158 by cyclin A-CDK2 and at Ser-10 by ATM in response to DNA damage. Phosphorylation at these two sites promotes the intramolecular interaction of the N-terminal domain with the helicase ATP-binding domain, thereby probably releasing the inhibitory effect of the N-terminal domain on its ATPase activity. Phosphorylation is essential for its chromatin remodeling activity. Post-translationally, ubiquitinated at the C-terminus. Ubiquitination by the CSA complex leads to ERCC6 proteasomal degradation in a UV-dependent manner. Stabilized following interaction with KIAA1530/UVSSA, which promotes recruitment of deubiquitinating enzyme USP7, leading to deubiquitination of ERCC6 thereby preventing UV-induced degradation of ERCC6 by the proteasome. Sumoylation at Lys-205 in an UV-radiation-dependent manner is essential for its transcription-coupled nucleotide excision repair activity.

It is found in the nucleus. The protein localises to the chromosome. It catalyses the reaction ATP + H2O = ADP + phosphate + H(+). Its function is as follows. Essential factor involved in transcription-coupled nucleotide excision repair (TC-NER), a process during which RNA polymerase II-blocking lesions are rapidly removed from the transcribed strand of active genes. Plays a central role in the initiation of the TC-NER process: specifically recognizes and binds RNA polymerase II stalled at a lesion, and mediates recruitment of ERCC8/CSA, initiating DNA damage excision by TFIIH recruitment. Upon DNA-binding, it locally modifies DNA conformation by wrapping the DNA around itself, thereby modifying the interface between stalled RNA polymerase II and DNA. Acts as a chromatin remodeler at DSBs; DNA-dependent ATPase-dependent activity is essential for this function. Plays an important role in regulating the choice of the DNA double-strand breaks (DSBs) repair pathway and G2/M checkpoint activation; DNA-dependent ATPase activity is essential for this function. Regulates the DNA repair pathway choice by inhibiting non-homologous end joining (NHEJ), thereby promoting the homologous recombination (HR)-mediated repair of DSBs during the S/G2 phases of the cell cycle. Mediates the activation of the ATM- and CHEK2-dependent DNA damage responses thus preventing premature entry of cells into mitosis following the induction of DNA DSBs. Remodels chromatin by evicting histones from chromatin flanking DSBs, limiting RIF1 accumulation at DSBs thereby promoting BRCA1-mediated HR. Required for stable recruitment of ELOA and CUL5 to DNA damage sites. Also involved in UV-induced translocation of ERCC8 to the nuclear matrix. Essential for neuronal differentiation and neuritogenesis; regulates transcription and chromatin remodeling activities required during neurogenesis. The polypeptide is DNA excision repair protein ERCC-6 (Homo sapiens (Human)).